A 580-amino-acid chain; its full sequence is Microcin-J25 export ATP-binding/permease protein McjD (580 aa).

A run of 6 helical transmembrane segments spans residues Phe25–Ile45, Val66–Phe86, Val143–Ser163, Trp167–Leu187, Ala261–Val281, and Phe286–Leu306. The ABC transmembrane type-1 domain occupies Phe25–Gln312. Residues Leu345–Val578 form the ABC transporter domain. Residue Gly378–Ser385 participates in ATP binding.

Belongs to the ABC transporter superfamily. As to quaternary structure, homodimer.

It is found in the cell inner membrane. In terms of biological role, is able to protect a cell, which harbors the plasmid pTUC100 encoding microcin J25, against microcin J25. Is required for microcin J25 export out of the producing cells. The sequence is that of Microcin-J25 export ATP-binding/permease protein McjD (mcjD) from Escherichia coli.